A 145-amino-acid chain; its full sequence is MDESKKNERLQQLTDIQYNVTQKAGTERPFQNEFYDNVAKGIYVDIVSGKPLFSSNDQYDAGCGWPSFTKPIDEAEVIEHRDLTHGMIRTEVKSADADSHLGHVFPDGPQDKGGLRYCINSAALRFIPVDKLEEEGYQAYKKIFE.

Positions K6–V129 constitute a MsrB domain. Residue C118 is the Nucleophile of the active site.

This sequence belongs to the MsrB Met sulfoxide reductase family.

The enzyme catalyses L-methionyl-[protein] + [thioredoxin]-disulfide + H2O = L-methionyl-(R)-S-oxide-[protein] + [thioredoxin]-dithiol. This Listeria monocytogenes serotype 4a (strain HCC23) protein is Peptide methionine sulfoxide reductase MsrB.